The following is a 129-amino-acid chain: Endocuticle structural glycoprotein SgAbd-9 (129 aa).

Gln-1 carries the post-translational modification Pyrrolidone carboxylic acid. A Chitin-binding type R&amp;R domain is found at Asp-28–Ser-98. Thr-120 carries O-linked (HexNAc...) threonine glycosylation.

In terms of biological role, component of the abdominal endocuticle. This chain is Endocuticle structural glycoprotein SgAbd-9, found in Schistocerca gregaria (Desert locust).